The primary structure comprises 147 residues: uncharacterized protein (147 aa).

Residues methionine 1–lysine 16 are Extracellular-facing. The chain crosses the membrane as a helical span at residues valine 17–isoleucine 37. Topologically, residues threonine 38–asparagine 105 are cytoplasmic. Residues glutamate 106–serine 126 form a helical membrane-spanning segment. Over glutamate 127 to asparagine 147 the chain is Extracellular.

It is found in the membrane. This is an uncharacterized protein from Saccharomyces cerevisiae (strain ATCC 204508 / S288c) (Baker's yeast).